The sequence spans 351 residues: Translation initiation factor eIF2B subunit beta (351 aa).

It belongs to the eIF-2B alpha/beta/delta subunits family. Component of the translation initiation factor 2B (eIF2B) complex which is a heterodecamer of two sets of five different subunits: alpha, beta, gamma, delta and epsilon. Subunits alpha, beta and delta comprise a regulatory subcomplex and subunits epsilon and gamma comprise a catalytic subcomplex. Within the complex, the hexameric regulatory complex resides at the center, with the two heterodimeric catalytic subcomplexes bound on opposite sides.

The protein localises to the cytoplasm. Its subcellular location is the cytosol. With respect to regulation, activated by the chemical integrated stress response (ISR) inhibitor ISRIB which stimulates guanine nucleotide exchange factor activity for both phosphorylated and unphosphorylated eIF2. Its function is as follows. Acts as a component of the translation initiation factor 2B (eIF2B) complex, which catalyzes the exchange of GDP for GTP on eukaryotic initiation factor 2 (eIF2) gamma subunit. Its guanine nucleotide exchange factor activity is repressed when bound to eIF2 complex phosphorylated on the alpha subunit, thereby limiting the amount of methionyl-initiator methionine tRNA available to the ribosome and consequently global translation is repressed. This is Translation initiation factor eIF2B subunit beta (Eif2b2) from Rattus norvegicus (Rat).